Consider the following 106-residue polypeptide: SDO1-like protein C21C3.19 (106 aa).

The protein belongs to the SDO1-like family.

The protein resides in the cytoplasm. It is found in the nucleus. In terms of biological role, may play a role in RNA metabolism. The protein is SDO1-like protein C21C3.19 of Schizosaccharomyces pombe (strain 972 / ATCC 24843) (Fission yeast).